We begin with the raw amino-acid sequence, 832 residues long: SID1 transmembrane family member 2 (832 aa).

The first 15 residues, 1-15 (MIAWRLPLCVLLVAA), serve as a signal peptide directing secretion. The Extracellular portion of the chain corresponds to 16–293 (VESHLGALGP…VSQAVTSEAY (278 aa)). N-linked (GlcNAc...) asparagine glycosylation is found at asparagine 27, asparagine 54, asparagine 60, asparagine 123, asparagine 141, and asparagine 165. The chain crosses the membrane as a helical span at residues 294–314 (VGGMLFCLGIFLSFYLLTVLL). Over 315–447 (ACWENWRQRK…DKRVLRKKYQ (133 aa)) the chain is Cytoplasmic. Residues serine 401, serine 403, and serine 404 each carry the phosphoserine modification. Residues 448–468 (IYFWNIATIAVFYALPVVQLV) traverse the membrane as a helical segment. The Extracellular portion of the chain corresponds to 469 to 499 (ITYQTVVNVTGNQDICYYNFLCAHPLGNLSA). N-linked (GlcNAc...) asparagine glycosylation is found at asparagine 476 and asparagine 496. A helical membrane pass occupies residues 500–520 (FNNILSNLGYILLGLLFLLII). At 521–546 (LQREINHNRALLRNDLYALECGIPKH) the chain is on the cytoplasmic side. A helical transmembrane segment spans residues 547-567 (FGLFYAMGTALMMEGLLSACY). At 568–605 (HVCPNYTNFQFDTSFMYMIAGLCMLKLYQKRHPDINAS) the chain is on the extracellular side. Residues asparagine 572 and asparagine 603 are each glycosylated (N-linked (GlcNAc...) asparagine). Residues 606 to 626 (AYSAYACLAIVIFFSVLGVVF) traverse the membrane as a helical segment. Residues 627 to 631 (GKGNT) lie on the Cytoplasmic side of the membrane. The helical transmembrane segment at 632 to 652 (AFWIVFSVIHIISTLLLSTQL) threads the bilayer. The Extracellular segment spans residues 653–688 (YYMGRWKLDSGIFRRILHVLYTDCIRQCSGPLYTDR). A helical membrane pass occupies residues 689–709 (MVLLVMGNIINWSLAAYGLIM). The Cytoplasmic segment spans residues 710–715 (RPNDFA). A helical transmembrane segment spans residues 716–736 (SYLLAIGICNLLLYFAFYIIM). The Extracellular segment spans residues 737–746 (KLRSGERIKL). The chain crosses the membrane as a helical span at residues 747–767 (IPLLCIVCTSVVWGFALFFFF). The Cytoplasmic segment spans residues 768–796 (QGLSTWQKTPAESREHNRDCILLDFFDDH). Residues 797-817 (DIWHFLSSIAMFGSFLVLLTL) form a helical membrane-spanning segment. Residues 818-832 (DDDLDTVQRDKIYVF) are Extracellular-facing.

The protein belongs to the SID1 family. Interacts with adapter protein complex 1 (AP-1) and AP-2, but not AP-3 and AP-4. Interacts with LAMP2. Post-translationally, glycosylated. In terms of tissue distribution, highly expressed in the liver, brain, kidney and intestine (at protein level).

The protein localises to the lysosome membrane. It localises to the cell membrane. Mediates the translocation of RNA and DNA across the lysosomal membrane during RNA and DNA autophagy (RDA), a process in which RNA or DNA is directly imported into lysosomes in an ATP-dependent manner, and degraded. Involved in the uptake of single-stranded oligonucleotides by living cells, a process called gymnosis. In vitro, mediates the uptake of linear DNA more efficiently than that of circular DNA, but exhibits similar uptake efficacy toward RNA and DNA. Binds long double-stranded RNA (dsRNA) (500 - 700 base pairs), but not dsRNA shorter than 100 bp. The sequence is that of SID1 transmembrane family member 2 (Sidt2) from Rattus norvegicus (Rat).